A 499-amino-acid chain; its full sequence is Probable alpha-L-arabinofuranosidase B (499 aa).

The signal sequence occupies residues 1–17 (MFSRRNLLALGLAATVS). The tract at residues 18-335 (AGPCDIYEAG…ENIVAAKYVV (318 aa)) is catalytic. Cystine bridges form between Cys21/Cys31, Cys81/Cys86, and Cys176/Cys177. N-linked (GlcNAc...) asparagine glycosylation is present at Asn83. Asn202 is a glycosylation site (N-linked (GlcNAc...) asparagine). Asp219 serves as a coordination point for substrate. Glu221 serves as the catalytic Nucleophile. Asn222, Asn223, Gly296, His416, Asn418, Phe419, Asp435, His463, Glu465, Leu468, and Asp488 together coordinate substrate. Positions 336-499 (GSLVSGPSFT…SFEIETAFAS (164 aa)) are ABD. Residues Cys401 and Cys439 are joined by a disulfide bond.

Belongs to the glycosyl hydrolase 54 family.

The protein resides in the secreted. The catalysed reaction is Hydrolysis of terminal non-reducing alpha-L-arabinofuranoside residues in alpha-L-arabinosides.. Its pathway is glycan metabolism; L-arabinan degradation. In terms of biological role, alpha-L-arabinofuranosidase involved in the degradation of arabinoxylan, a major component of plant hemicellulose. Able to hydrolyze 1,5-, 1,3- and 1,2-alpha-linkages not only in L-arabinofuranosyl oligosaccharides, but also in polysaccharides containing terminal non-reducing L-arabinofuranoses in side chains, like L-arabinan, arabinogalactan and arabinoxylan. The polypeptide is Probable alpha-L-arabinofuranosidase B (abfB) (Aspergillus awamori (Black koji mold)).